The following is a 124-amino-acid chain: uncharacterized protein (124 aa).

Residues 70 to 90 (LLYLALVLLLVVILSTAFFSI) form a helical membrane-spanning segment.

Its subcellular location is the membrane. This is an uncharacterized protein from Saccharomyces cerevisiae (strain ATCC 204508 / S288c) (Baker's yeast).